Consider the following 742-residue polypeptide: Vesicle-fusing ATPase (742 aa).

Residues 499–504 (NGMVDC) and 539–546 (SGSGKTAL) each bind ATP. Position 544 (threonine 544) interacts with Mg(2+).

Belongs to the AAA ATPase family. As to quaternary structure, homohexamer. Binds to SNARE-SNAP complexes to form 20S particles. The cofactor is Mg(2+).

It is found in the cytoplasm. It carries out the reaction ATP + H2O = ADP + phosphate + H(+). Functionally, required for vesicle-mediated transport. Catalyzes the fusion of transport vesicles within the Golgi cisternae. Is also required for transport from the endoplasmic reticulum to the Golgi stack. Seems to function as a fusion protein required for the delivery of cargo proteins to all compartments of the Golgi stack independent of vesicle origin. Required for maintaining the normal morphology of the Golgi apparatus. The chain is Vesicle-fusing ATPase from Arabidopsis thaliana (Mouse-ear cress).